The following is a 578-amino-acid chain: Palmitoyltransferase ZDHHC1 (578 aa).

Over 1–41 (MDVCSKNSNRTAPVSEGGIRRADVPLCSRTNGWSWPPHPFQ) the chain is Cytoplasmic. A helical membrane pass occupies residues 42 to 62 (FLAWLLYLYFAVTGFGVFVPL). At 63–71 (LPTHWIPAG) the chain is on the lumenal side. The helical transmembrane segment at 72–92 (YICTGITFVCHLFMHLMAVSI) threads the bilayer. Over 93–174 (DPADYNVRAK…YWLFLNSVIS (82 aa)) the chain is Cytoplasmic. Residues 121–173 (ENCHCYLCEVDVGPKSKHCSACNKCVASFDHHCRWLNNCVGSRNYWLFLNSVI) enclose the DHHC domain. Residue cysteine 153 is the S-palmitoyl cysteine intermediate of the active site. A helical membrane pass occupies residues 175 to 195 (ALLGIVLVVVIASYVFIEFFL). The Lumenal portion of the chain corresponds to 196 to 230 (DPSKLRSDKHFQQVRNESVVWFVFLPVAPVTTAGP). A helical transmembrane segment spans residues 231–251 (AIPALAGVTIALGLLSALLLG). Topologically, residues 252–578 (HLLCFHIYLM…PSSRVGTSLA (327 aa)) are cytoplasmic. A compositionally biased stretch (basic and acidic residues) spans 278 to 288 (QEAGDSRKPPP). Disordered stretches follow at residues 278–298 (QEAG…PKLN), 345–376 (HMDE…KRKV), 497–517 (SAAG…TAAR), and 532–578 (SMFM…TSLA). The segment covering 363-376 (PHPHKHAQKKKRKV) has biased composition (basic residues). Positions 552 to 561 (AAKRKQTGKK) are enriched in basic residues.

The protein belongs to the DHHC palmitoyltransferase family.

It localises to the endosome membrane. It is found in the endoplasmic reticulum membrane. The protein localises to the golgi apparatus. It carries out the reaction L-cysteinyl-[protein] + hexadecanoyl-CoA = S-hexadecanoyl-L-cysteinyl-[protein] + CoA. In terms of biological role, palmitoyltransferase that catalyzes the addition of palmitate onto various protein substrates, such as ncdn and nlrp3. The polypeptide is Palmitoyltransferase ZDHHC1 (Danio rerio (Zebrafish)).